A 287-amino-acid polypeptide reads, in one-letter code: Heavy metal-associated isoprenylated plant protein 4 (287 aa).

2 HMA domains span residues 14 to 80 and 112 to 176; these read IITA…VELI and IRTT…KHAE. C25, C28, C123, and C126 together coordinate a metal cation. A coiled-coil region spans residues 179–235; sequence SSKTEEEKKKEEEDKKKKEEEDKKKKEDEKKKEEEKKKEEENKKKEGEKKKEEVKVE. The interval 181-232 is disordered; it reads KTEEEKKKEEEDKKKKEEEDKKKKEDEKKKEEEKKKEEENKKKEGEKKKEEV. C284 carries the post-translational modification Cysteine methyl ester. Residue C284 is the site of S-farnesyl cysteine attachment. The propeptide at 285 to 287 is removed in mature form; it reads RIV.

The protein belongs to the HIPP family.

Functionally, heavy-metal-binding protein. The polypeptide is Heavy metal-associated isoprenylated plant protein 4 (Arabidopsis thaliana (Mouse-ear cress)).